The primary structure comprises 308 residues: Elongation factor Ts (308 aa).

The tract at residues 80-83 is involved in Mg(2+) ion dislocation from EF-Tu; it reads TDFV.

The protein belongs to the EF-Ts family.

The protein localises to the cytoplasm. Functionally, associates with the EF-Tu.GDP complex and induces the exchange of GDP to GTP. It remains bound to the aminoacyl-tRNA.EF-Tu.GTP complex up to the GTP hydrolysis stage on the ribosome. This is Elongation factor Ts from Rhizobium johnstonii (strain DSM 114642 / LMG 32736 / 3841) (Rhizobium leguminosarum bv. viciae).